The primary structure comprises 728 residues: Magnetosome formation protease MamE (728 aa).

The Cytoplasmic portion of the chain corresponds to 1–21 (MAMFNGDVEDGGRGDASCGKD). A helical membrane pass occupies residues 22 to 42 (LKRYLMLMGVVALVVLFGAFI). The Lumenal segment spans residues 43–728 (YRQSSGGLRL…RNGQEFWIVL (686 aa)). Catalysis depends on charge relay system residues H188, D221, and S297. An MCR (magnetochrome) 1 motif is present at residues 375–398 (IFAGTRAPHTDGRQNMDCTTCHDL). C392, C395, H396, C438, C441, and H442 together coordinate heme. The MCR 2 motif lies at 421–444 (IPMGAVSPHTDGRQNMNCANCHQM). 2 consecutive PDZ domains span residues 471 to 573 (AINI…LRDG) and 622 to 721 (PAVM…NRNG).

It in the N-terminal section; belongs to the peptidase S1C family. As to quaternary structure, might interact with MamB via PDZ1. Heme is required as a cofactor. Subject to autocatalytic cleavage; cleavage also requires MamO.

The protein resides in the magnetosome membrane. Autoproteolysis is stimulated by exogenous substrates or peptides that bind to its PDZ domains; may be stimulated by an environmental cue in vivo. Protease activity is tightly regulated; increasing its activity decreases substrate levels and disturbs biomineralization. Acts at 2 distinct steps of magnetosome formation; required for correct localization of proteins to the magnetosome while the protease activity is required for maturation of small magnetite crystals into larger, functional ones. The 2 functions are separable by mutation. Probably cleaves at least itself, MamO and MamP; cleavage requires the putative transport domain of MamO. Involved in localization of some proteins (at least MamA, MamC, MamF, MamI and MamJ) to the magnetosome. This chain is Magnetosome formation protease MamE (mamE), found in Paramagnetospirillum magneticum (strain ATCC 700264 / AMB-1) (Magnetospirillum magneticum).